Consider the following 146-residue polypeptide: MFRGTSYHRIDPKGRIVIPSRFRDLIGADGTAMITFFEGGLYAYTLEEWSKIEAKMVMLEKKGNQMRRFRRFFIGRASECQPDKQWRLLIPPELRQDAGLEEEIVLIGISDHFEIWSRAKWEEQKNLHEDDMNDEDFQNEIEKLGL.

SpoVT-AbrB domains lie at 5 to 48 (TSYH…TLEE) and 77 to 120 (ASEC…SRAK).

It belongs to the MraZ family. In terms of assembly, forms oligomers.

Its subcellular location is the cytoplasm. It is found in the nucleoid. The chain is Transcriptional regulator MraZ from Desulfosudis oleivorans (strain DSM 6200 / JCM 39069 / Hxd3) (Desulfococcus oleovorans).